A 354-amino-acid chain; its full sequence is Ferrochelatase (354 aa).

2 residues coordinate Fe cation: His-214 and Glu-295.

Belongs to the ferrochelatase family.

The protein resides in the cytoplasm. It catalyses the reaction heme b + 2 H(+) = protoporphyrin IX + Fe(2+). It functions in the pathway porphyrin-containing compound metabolism; protoheme biosynthesis; protoheme from protoporphyrin-IX: step 1/1. Functionally, catalyzes the ferrous insertion into protoporphyrin IX. The sequence is that of Ferrochelatase from Burkholderia orbicola (strain AU 1054).